Reading from the N-terminus, the 458-residue chain is tRNA modification GTPase MnmE (458 aa).

Positions 26, 88, and 127 each coordinate (6S)-5-formyl-5,6,7,8-tetrahydrofolate. The TrmE-type G domain maps to 224–378; it reads GLSTAIIGRP…IEDRINQLFF (155 aa). N234 provides a ligand contact to K(+). Residues 234–239, 253–259, and 278–281 contribute to the GTP site; these read NVGKSS, TDIAGTT, and DTAG. S238 contacts Mg(2+). K(+) is bound by residues T253, I255, and T258. Position 259 (T259) interacts with Mg(2+). K458 is a binding site for (6S)-5-formyl-5,6,7,8-tetrahydrofolate.

The protein belongs to the TRAFAC class TrmE-Era-EngA-EngB-Septin-like GTPase superfamily. TrmE GTPase family. Homodimer. Heterotetramer of two MnmE and two MnmG subunits. It depends on K(+) as a cofactor.

It is found in the cytoplasm. Functionally, exhibits a very high intrinsic GTPase hydrolysis rate. Involved in the addition of a carboxymethylaminomethyl (cmnm) group at the wobble position (U34) of certain tRNAs, forming tRNA-cmnm(5)s(2)U34. The polypeptide is tRNA modification GTPase MnmE (Streptococcus pyogenes serotype M5 (strain Manfredo)).